The chain runs to 269 residues: NAD-capped RNA hydrolase NudC (269 aa).

Position 81 (R81) interacts with substrate. Residues C110, C113, C128, and C131 each coordinate Zn(2+). Y136 serves as a coordination point for substrate. Positions 137–260 (PRIFPCIIVA…TIARALIEQT (124 aa)) constitute a Nudix hydrolase domain. Residues A170, E186, and E190 each contribute to the a divalent metal cation site. A Nudix box motif is present at residues 171–192 (GFVEVGETLEQCVAREVLEETG). 204-211 (QPWAFPSS) lines the substrate pocket. E231 contacts a divalent metal cation. A253 is a binding site for substrate.

This sequence belongs to the Nudix hydrolase family. NudC subfamily. In terms of assembly, homodimer. Mg(2+) serves as cofactor. It depends on Mn(2+) as a cofactor. The cofactor is Zn(2+).

It catalyses the reaction a 5'-end NAD(+)-phospho-ribonucleoside in mRNA + H2O = a 5'-end phospho-adenosine-phospho-ribonucleoside in mRNA + beta-nicotinamide D-ribonucleotide + 2 H(+). The catalysed reaction is NAD(+) + H2O = beta-nicotinamide D-ribonucleotide + AMP + 2 H(+). The enzyme catalyses NADH + H2O = reduced beta-nicotinamide D-ribonucleotide + AMP + 2 H(+). Its function is as follows. mRNA decapping enzyme that specifically removes the nicotinamide adenine dinucleotide (NAD) cap from a subset of mRNAs by hydrolyzing the diphosphate linkage to produce nicotinamide mononucleotide (NMN) and 5' monophosphate mRNA. The NAD-cap is present at the 5'-end of some mRNAs and stabilizes RNA against 5'-processing. Has preference for mRNAs with a 5'-end purine. Catalyzes the hydrolysis of a broad range of dinucleotide pyrophosphates. The chain is NAD-capped RNA hydrolase NudC from Vibrio cholerae serotype O1 (strain ATCC 39315 / El Tor Inaba N16961).